The chain runs to 114 residues: Large ribosomal subunit protein uL22 (114 aa).

This sequence belongs to the universal ribosomal protein uL22 family. Part of the 50S ribosomal subunit.

Its function is as follows. This protein binds specifically to 23S rRNA; its binding is stimulated by other ribosomal proteins, e.g. L4, L17, and L20. It is important during the early stages of 50S assembly. It makes multiple contacts with different domains of the 23S rRNA in the assembled 50S subunit and ribosome. Functionally, the globular domain of the protein is located near the polypeptide exit tunnel on the outside of the subunit, while an extended beta-hairpin is found that lines the wall of the exit tunnel in the center of the 70S ribosome. This Methylacidiphilum infernorum (isolate V4) (Methylokorus infernorum (strain V4)) protein is Large ribosomal subunit protein uL22.